A 561-amino-acid chain; its full sequence is Developmental and secondary metabolism regulator veA (561 aa).

Disordered regions lie at residues 1–23, 41–60, and 258–361; these read MANRPSLMPPHNETEHSVSRITR, ARACGAGAKSSADRRPVDPP, and AYAR…PQGI. Positions 12–23 are enriched in basic and acidic residues; the sequence is NETEHSVSRITR. The region spanning 25-233 is the Velvet domain; sequence GKQLTYKLSV…AEQGCRVRIR (209 aa). Positions 39–44 match the Nuclear localization signal motif; the sequence is ERARAC. Positions 258-268 are enriched in basic and acidic residues; that stretch reads AYARSSDRFTT. Polar residues predominate over residues 324 to 339; that stretch reads SHSQTPSYQSHLSFGS. A compositionally biased stretch (pro residues) spans 347–357; sequence PHMPPTPPPVA. The interval 438 to 485 is PEST; the sequence is RPQTPNLPAMPPPKPLSNDYANHVVPSVECTSPGGSGGGGYDNVRGKR. Positions 491–524 are disordered; that stretch reads GPTYGKRSHEDTFGLDDRSMQNGMRPDTEPYPAY. The segment covering 497-509 has biased composition (basic and acidic residues); sequence RSHEDTFGLDDRS.

Belongs to the velvet family. VeA subfamily. In terms of assembly, component of the heterotrimeric velvet complex composed of laeA, veA and velB; velA acting as a bridging protein between laeA and velB. Interacts with kapA. Interacts with vosA and velc.

It localises to the nucleus. The protein resides in the cytoplasm. Its function is as follows. Component of the velvet transcription factor complex that controls sexual/asexual developmental ratio in response to light, promoting sexual development in the darkness while stimulating asexual sporulation under illumination. The velvet complex acts as a global regulator for secondary metabolite gene expression. Controls the expression of the penicillin gene cluster. Positively controls the expression of the class V chitinase chiB1. Positively controls the expression of the transcription factor atfA. Required for cell wall integrity and controls hyphal branching. The protein is Developmental and secondary metabolism regulator veA of Penicillium rubens (strain ATCC 28089 / DSM 1075 / NRRL 1951 / Wisconsin 54-1255) (Penicillium chrysogenum).